Reading from the N-terminus, the 316-residue chain is MVDRLVNSEANTRRIASVENCFGSSGVPLAMQGRVLVGEGVLTKMCRKRPKSRQFFLFNDILVYGNIVIGKKKYNKQHIMPLEEVSLESIADNQTYRNGWYIRTTTKSFVVFAATSTEKQEWMAHINKCVEDLLRKSGKKPVENHAAVWVPDTDASVCMHCKKTQFTFIQRRHHCRNCGAVVCAGCSAKKFLLPQQSTKALRVCDACYERLKHVPSSLGSGEDSAAATGAASGNKLNTTAGDSSNDEDSDEETASPGGESHDEPRFYGDNSVLSAVEDSSTITSPSSATTGSLEAPQVTPSVQSSPAAVATTGSHC.

The PH domain occupies 35 to 131 (VLVGEGVLTK…WMAHINKCVE (97 aa)). Residues 152–212 (DTDASVCMHC…VCDACYERLK (61 aa)) form an FYVE-type zinc finger. Zn(2+) contacts are provided by Cys158, Cys161, Cys175, Cys178, Cys183, Cys186, Cys204, and Cys207. The interval 215 to 316 (PSSLGSGEDS…AAVATTGSHC (102 aa)) is disordered. Residues 244–253 (SNDEDSDEET) show a composition bias toward acidic residues. Residues 279 to 292 (SSTITSPSSATTGS) are compositionally biased toward low complexity. Over residues 298 to 316 (VTPSVQSSPAAVATTGSHC) the composition is skewed to polar residues.

In terms of assembly, interacts with Gdi (Rab GDP dissociation inhibitor). As to expression, in ovaries, expressed both in the germ line cells and in the overlying somatic follicular epithelium.

It is found in the apical cell membrane. It localises to the endosome membrane. The protein localises to the cytoplasm. Its subcellular location is the cell cortex. Functions in the regulation of endosome morphology and late endosome formation. Has a role in controlling trafficking from early to late endosomes and from late endosomes to lysosomes. Important for localization of Gdi to the endosomal membranes. May function in controlling the activity of multiple regulators in the endocytic pathway, perhaps by positively controlling those involved in the early steps of endocytosis such as Rab5 and hrs, and negative regulating those involved in the late stages of endocytosis like car and VhaSFD. The polypeptide is Pleckstrin homology domain-containing family F member 1 homolog (Drosophila melanogaster (Fruit fly)).